Consider the following 501-residue polypeptide: G protein-activated inward rectifier potassium channel 1 (501 aa).

The tract at residues 1 to 40 (MSALRRKFGDDYQVVTTSSSGSGLQPQGPGQGPQQQLVPK) is disordered. The Cytoplasmic segment spans residues 1–80 (MSALRRKFGD…LFTTLVDLKW (80 aa)). Low complexity predominate over residues 18-37 (SSSGSGLQPQGPGQGPQQQL). Residues 81 to 105 (RWNLFIFILTYTVAWLFMASMWWVI) traverse the membrane as a helical segment. At 106–129 (AYTRGDLNKAHVGNYTPCVANVYN) the chain is on the extracellular side. A glycan (N-linked (GlcNAc...) asparagine) is linked at Asn119. Residues 130 to 141 (FPSAFLFFIETE) constitute an intramembrane region (helical; Pore-forming). Positions 142–148 (ATIGYGY) form an intramembrane region, pore-forming. Residues 143 to 148 (TIGYGY) carry the Selectivity filter motif. Residues 149 to 157 (RYITDKCPE) are Extracellular-facing. The helical transmembrane segment at 158-179 (GIILFLFQSILGSIVDAFLIGC) threads the bilayer. Residues 180-501 (MFIKMSQPKK…LRKMNSDRFT (322 aa)) lie on the Cytoplasmic side of the membrane. The interval 182-209 (IKMSQPKKRAETLMFSEHAVISMRDGKL) is polyphosphoinositide (PIP2)-binding. Residues Ser385 and Ser424 each carry the phosphoserine modification.

This sequence belongs to the inward rectifier-type potassium channel (TC 1.A.2.1) family. KCNJ3 subfamily. As to quaternary structure, associates with KCNJ5/GIRK4 or KCNJ6/GIRK2 or KCNJ9/GIRK3 to form a G-protein activated heteromultimer pore-forming unit. The resulting inward current is much larger.

It localises to the membrane. It carries out the reaction K(+)(in) = K(+)(out). With respect to regulation, heteromultimer composed of KCNJ3/GIRK1 and KCNJ5/GIRK4 is activated by phosphatidylinositol 4,5 biphosphate (PtdIns(4,5)P2). In terms of biological role, inward rectifier potassium channels are characterized by a greater tendency to allow potassium to flow into the cell rather than out of it. Their voltage dependence is regulated by the concentration of extracellular potassium; as external potassium is raised, the voltage range of the channel opening shifts to more positive voltages. The inward rectification is mainly due to the blockage of outward current by internal magnesium. This potassium channel is controlled by G proteins. This receptor plays a crucial role in regulating the heartbeat. The chain is G protein-activated inward rectifier potassium channel 1 (KCNJ3) from Bos taurus (Bovine).